We begin with the raw amino-acid sequence, 338 residues long: Ketol-acid reductoisomerase (NADP(+)) (338 aa).

Residues 1–181 form the KARI N-terminal Rossmann domain; sequence MKVSYDKDCD…GGGRTGIIET (181 aa). Residues 24-27, arginine 47, serine 50, serine 52, and 82-85 each bind NADP(+); these read YGSQ and DEFQ. Residue histidine 107 is part of the active site. Position 133 (glycine 133) interacts with NADP(+). Residues 182–327 enclose the KARI C-terminal knotted domain; it reads TFKDETETDL…EKLRAMMPWI (146 aa). The Mg(2+) site is built by aspartate 190, glutamate 194, glutamate 226, and glutamate 230. Serine 251 provides a ligand contact to substrate.

The protein belongs to the ketol-acid reductoisomerase family. Requires Mg(2+) as cofactor.

The enzyme catalyses (2R)-2,3-dihydroxy-3-methylbutanoate + NADP(+) = (2S)-2-acetolactate + NADPH + H(+). The catalysed reaction is (2R,3R)-2,3-dihydroxy-3-methylpentanoate + NADP(+) = (S)-2-ethyl-2-hydroxy-3-oxobutanoate + NADPH + H(+). It participates in amino-acid biosynthesis; L-isoleucine biosynthesis; L-isoleucine from 2-oxobutanoate: step 2/4. The protein operates within amino-acid biosynthesis; L-valine biosynthesis; L-valine from pyruvate: step 2/4. Its function is as follows. Involved in the biosynthesis of branched-chain amino acids (BCAA). Catalyzes an alkyl-migration followed by a ketol-acid reduction of (S)-2-acetolactate (S2AL) to yield (R)-2,3-dihydroxy-isovalerate. In the isomerase reaction, S2AL is rearranged via a Mg-dependent methyl migration to produce 3-hydroxy-3-methyl-2-ketobutyrate (HMKB). In the reductase reaction, this 2-ketoacid undergoes a metal-dependent reduction by NADPH to yield (R)-2,3-dihydroxy-isovalerate. This Stutzerimonas stutzeri (strain A1501) (Pseudomonas stutzeri) protein is Ketol-acid reductoisomerase (NADP(+)).